Reading from the N-terminus, the 191-residue chain is uncharacterized protein (191 aa).

This is an uncharacterized protein from Methanocaldococcus jannaschii (strain ATCC 43067 / DSM 2661 / JAL-1 / JCM 10045 / NBRC 100440) (Methanococcus jannaschii).